A 176-amino-acid polypeptide reads, in one-letter code: Transcription factor E (176 aa).

Residues 5-89 form the HTH TFE/IIEalpha-type domain; the sequence is IDQLMKDMAR…YWKANVDQIN (85 aa).

This sequence belongs to the TFE family. Monomer. Interaction with RNA polymerase subunits RpoF and RpoE is necessary for Tfe stimulatory transcription activity. Able to interact with Tbp and RNA polymerase in the absence of DNA promoter. Interacts both with the preinitiation and elongation complexes.

Functionally, transcription factor that plays a role in the activation of archaeal genes transcribed by RNA polymerase. Facilitates transcription initiation by enhancing TATA-box recognition by TATA-box-binding protein (Tbp), and transcription factor B (Tfb) and RNA polymerase recruitment. Not absolutely required for transcription in vitro, but particularly important in cases where Tbp or Tfb function is not optimal. It dynamically alters the nucleic acid-binding properties of RNA polymerases by stabilizing the initiation complex and destabilizing elongation complexes. Seems to translocate with the RNA polymerase following initiation and acts by binding to the non template strand of the transcription bubble in elongation complexes. In Metallosphaera sedula (strain ATCC 51363 / DSM 5348 / JCM 9185 / NBRC 15509 / TH2), this protein is Transcription factor E.